Consider the following 93-residue polypeptide: Phosphoribosyl-ATP pyrophosphatase (93 aa).

It belongs to the PRA-PH family.

The protein resides in the cytoplasm. It carries out the reaction 1-(5-phospho-beta-D-ribosyl)-ATP + H2O = 1-(5-phospho-beta-D-ribosyl)-5'-AMP + diphosphate + H(+). It functions in the pathway amino-acid biosynthesis; L-histidine biosynthesis; L-histidine from 5-phospho-alpha-D-ribose 1-diphosphate: step 2/9. The protein is Phosphoribosyl-ATP pyrophosphatase of Mycolicibacterium paratuberculosis (strain ATCC BAA-968 / K-10) (Mycobacterium paratuberculosis).